A 242-amino-acid chain; its full sequence is 7-cyano-7-deazaguanine synthase (242 aa).

12-22 (FSGGQDSTTCL) is an ATP binding site. Zn(2+) contacts are provided by Cys200, Cys215, Cys218, and Cys221.

The protein belongs to the QueC family. Zn(2+) serves as cofactor.

It carries out the reaction 7-carboxy-7-deazaguanine + NH4(+) + ATP = 7-cyano-7-deazaguanine + ADP + phosphate + H2O + H(+). The protein operates within purine metabolism; 7-cyano-7-deazaguanine biosynthesis. Functionally, catalyzes the ATP-dependent conversion of 7-carboxy-7-deazaguanine (CDG) to 7-cyano-7-deazaguanine (preQ(0)). The protein is 7-cyano-7-deazaguanine synthase of Nitratidesulfovibrio vulgaris (strain ATCC 29579 / DSM 644 / CCUG 34227 / NCIMB 8303 / VKM B-1760 / Hildenborough) (Desulfovibrio vulgaris).